A 412-amino-acid polypeptide reads, in one-letter code: Translation initiation factor 2 subunit gamma (412 aa).

In terms of domain architecture, tr-type G spans 7–203 (QPEVNIGLVG…AIESEIPTPD (197 aa)). The interval 16–23 (GHVDHGKT) is G1. Aspartate 19, threonine 23, glycine 44, and serine 46 together coordinate Mg(2+). 19–24 (DHGKTT) provides a ligand contact to GTP. The segment at 44 to 48 (GISIR) is G2. Residues 90-93 (DAPG) form a G3 region. Residues 146 to 149 (NKVD) and 181 to 183 (SAQ) contribute to the GTP site. The segment at 146–149 (NKVD) is G4. A G5 region spans residues 181-183 (SAQ).

This sequence belongs to the TRAFAC class translation factor GTPase superfamily. Classic translation factor GTPase family. EIF2G subfamily. As to quaternary structure, heterotrimer composed of an alpha, a beta and a gamma chain. Mg(2+) serves as cofactor.

It carries out the reaction GTP + H2O = GDP + phosphate + H(+). Its function is as follows. eIF-2 functions in the early steps of protein synthesis by forming a ternary complex with GTP and initiator tRNA. The polypeptide is Translation initiation factor 2 subunit gamma (Halorubrum lacusprofundi (strain ATCC 49239 / DSM 5036 / JCM 8891 / ACAM 34)).